A 270-amino-acid chain; its full sequence is Orotidine 5'-phosphate decarboxylase (270 aa).

Catalysis depends on Lys-89, which acts as the Proton donor.

It belongs to the OMP decarboxylase family. Type 2 subfamily.

It carries out the reaction orotidine 5'-phosphate + H(+) = UMP + CO2. The protein operates within pyrimidine metabolism; UMP biosynthesis via de novo pathway; UMP from orotate: step 2/2. This is Orotidine 5'-phosphate decarboxylase from Dehalococcoides mccartyi (strain ATCC BAA-2100 / JCM 16839 / KCTC 5957 / BAV1).